Consider the following 178-residue polypeptide: Large ribosomal subunit protein uL5 (178 aa).

Residue A2 is modified to N-acetylalanine. Residue K38 forms a Glycyl lysine isopeptide (Lys-Gly) (interchain with G-Cter in SUMO2) linkage. Residues T44 and T47 each carry the phosphothreonine modification. K52 carries the post-translational modification N6-acetyllysine; alternate. Residue K52 forms a Glycyl lysine isopeptide (Lys-Gly) (interchain with G-Cter in SUMO2); alternate linkage. K85 bears the N6-acetyllysine mark. A Glycyl lysine isopeptide (Lys-Gly) (interchain with G-Cter in SUMO2) cross-link involves residue K154.

The protein belongs to the universal ribosomal protein uL5 family. In terms of assembly, component of the large ribosomal subunit (LSU). Part of the 5S RNP complex, which is a LSU subcomplex composed of the 5S RNA, RPL5 and RPL11. Component of a hexameric 5S RNP precursor complex, composed of 5S RNA, RRS1, RPF2/BXDC1, RPL5, RPL11 and HEATR3; this complex acts as a precursor for ribosome assembly. Interacts with PML. Interacts with MDM2 (via its RanBP2-type zinc finger domain); negatively regulates MDM2-mediated TP53 ubiquitination and degradation. Interacts with NOP53; retains RPL11 into the nucleolus.

The protein resides in the nucleus. Its subcellular location is the nucleolus. It localises to the cytoplasm. Its function is as follows. Component of the ribosome, a large ribonucleoprotein complex responsible for the synthesis of proteins in the cell. The small ribosomal subunit (SSU) binds messenger RNAs (mRNAs) and translates the encoded message by selecting cognate aminoacyl-transfer RNA (tRNA) molecules. The large subunit (LSU) contains the ribosomal catalytic site termed the peptidyl transferase center (PTC), which catalyzes the formation of peptide bonds, thereby polymerizing the amino acids delivered by tRNAs into a polypeptide chain. The nascent polypeptides leave the ribosome through a tunnel in the LSU and interact with protein factors that function in enzymatic processing, targeting, and the membrane insertion of nascent chains at the exit of the ribosomal tunnel. As part of the 5S RNP/5S ribonucleoprotein particle it is an essential component of the LSU, required for its formation and the maturation of rRNAs. It also couples ribosome biogenesis to p53/TP53 activation. As part of the 5S RNP it accumulates in the nucleoplasm and inhibits MDM2, when ribosome biogenesis is perturbed, mediating the stabilization and the activation of TP53. Promotes nucleolar location of PML. In Oryctolagus cuniculus (Rabbit), this protein is Large ribosomal subunit protein uL5 (RPL11).